Consider the following 141-residue polypeptide: Ly6/PLAUR domain-containing protein 1 (141 aa).

The N-terminal stretch at 1 to 20 (MWVLGIAATFCGLFLLPGFA) is a signal peptide. 6 cysteine pairs are disulfide-bonded: Cys-25–Cys-54, Cys-28–Cys-37, Cys-46–Cys-71, Cys-77–Cys-100, Cys-88–Cys-97, and Cys-101–Cys-106. One can recognise a UPAR/Ly6 domain in the interval 25–107 (CYQCEEFQLN…ISCCNTPLCN (83 aa)). Asn-45 is a glycosylation site (N-linked (GlcNAc...) asparagine). Ser-117 carries GPI-anchor amidated serine lipidation. Residues 118–141 (ASALRPGLRTTILFLKLALFSAHC) constitute a propeptide, removed in mature form.

As to quaternary structure, interacts with CHRNA4 and nAChRs containing alpha-4:beta-2 (CHRNA4:CHRNB2) and alpha-7 (CHRNA7) subunits.

Its subcellular location is the cell membrane. Believed to act as a modulator of nicotinic acetylcholine receptors (nAChRs) activity. In vitro increases receptor desensitization and decreases affinity for ACh of alpha-4:beta-2-containing nAChRs. May play a role in the intracellular trafficking of alpha-4:beta-2 and alpha-7-containing nAChRs and may inhibit their expression at the cell surface. May be involved in the control of anxiety. The sequence is that of Ly6/PLAUR domain-containing protein 1 (LYPD1) from Homo sapiens (Human).